The chain runs to 659 residues: Cysteine-rich receptor-like protein kinase 7 (659 aa).

Positions 1–23 (MSSLFPFIFLFLFSFLTSFRASA) are cleaved as a signal peptide. At 24–273 (QDPRFLAYYC…SLSDKSGNSN (250 aa)) the chain is on the extracellular side. 2 Gnk2-homologous domains span residues 27-131 (RFLA…HKNI) and 142-244 (FILR…LYDF). Residues Asn-35, Asn-42, Asn-60, Asn-69, and Asn-103 are each glycosylated (N-linked (GlcNAc...) asparagine). Asn-246 is a glycosylation site (N-linked (GlcNAc...) asparagine). Residues 274 to 294 (VVVVAVVVPIIVAVLIFIAGY) form a helical membrane-spanning segment. Residues 295-659 (CFFAKRAKKT…DKSMSDLDPR (365 aa)) are Cytoplasmic-facing. Residues 336–622 (FSENNKIGRG…ALPAPQQPGF (287 aa)) form the Protein kinase domain. ATP is bound by residues 342-350 (IGRGGFGDV) and Lys-364. Tyr-409 is modified (phosphotyrosine). Catalysis depends on Asp-461, which acts as the Proton acceptor. Ser-465 bears the Phosphoserine mark. Position 501 is a phosphothreonine (Thr-501). Residue Tyr-509 is modified to Phosphotyrosine. The disordered stretch occupies residues 626 to 659 (SRPGTNRLDSDQSTTNKSVTVSIDDKSMSDLDPR). The segment covering 636 to 646 (DQSTTNKSVTV) has biased composition (polar residues). Residues 648–659 (IDDKSMSDLDPR) show a composition bias toward basic and acidic residues.

It belongs to the protein kinase superfamily. Ser/Thr protein kinase family. CRK subfamily.

It is found in the membrane. It carries out the reaction L-seryl-[protein] + ATP = O-phospho-L-seryl-[protein] + ADP + H(+). The enzyme catalyses L-threonyl-[protein] + ATP = O-phospho-L-threonyl-[protein] + ADP + H(+). In Arabidopsis thaliana (Mouse-ear cress), this protein is Cysteine-rich receptor-like protein kinase 7 (CRK7).